The primary structure comprises 158 residues: Small ribosomal subunit protein uS10m (158 aa).

It belongs to the universal ribosomal protein uS10 family.

The protein localises to the mitochondrion. The protein is Small ribosomal subunit protein uS10m (mrps-10) of Caenorhabditis briggsae.